The following is a 512-amino-acid chain: D-alanine--D-alanyl carrier protein ligase (512 aa).

152 to 153 (TS) contacts ATP. D199 contacts D-alanine. An ATP-binding site is contributed by 294–299 (NAYGPT). V303 is a binding site for D-alanine. ATP is bound by residues D385, 397–400 (YGGR), and K499. Residue K499 coordinates D-alanine.

Belongs to the ATP-dependent AMP-binding enzyme family. DltA subfamily.

Its subcellular location is the cytoplasm. It catalyses the reaction holo-[D-alanyl-carrier protein] + D-alanine + ATP = D-alanyl-[D-alanyl-carrier protein] + AMP + diphosphate. Its pathway is cell wall biogenesis; lipoteichoic acid biosynthesis. Its function is as follows. Catalyzes the first step in the D-alanylation of lipoteichoic acid (LTA), the activation of D-alanine and its transfer onto the D-alanyl carrier protein (Dcp) DltC. In an ATP-dependent two-step reaction, forms a high energy D-alanyl-AMP intermediate, followed by transfer of the D-alanyl residue as a thiol ester to the phosphopantheinyl prosthetic group of the Dcp. D-alanylation of LTA plays an important role in modulating the properties of the cell wall in Gram-positive bacteria, influencing the net charge of the cell wall. The chain is D-alanine--D-alanyl carrier protein ligase from Streptococcus equi subsp. equi (strain 4047).